Reading from the N-terminus, the 86-residue chain is U15-lycotoxin-Ls1d (86 aa).

A signal peptide spans M1 to S20. The 46-residue stretch at D21–T66 folds into the WAP domain. 5 disulfide bridges follow: C24-C54, C32-C58, C41-C53, C42-C80, and C47-C62.

This sequence belongs to the venom protein 11 family. 01 (wap-1) subfamily. Contains 5 disulfide bonds. Expressed by the venom gland.

It is found in the secreted. In terms of biological role, has antibacterial activity. The protein is U15-lycotoxin-Ls1d of Lycosa singoriensis (Wolf spider).